The chain runs to 506 residues: Conglutin alpha 1 (506 aa).

The signal sequence occupies residues 1–19; sequence MANKLLALSLFLLFSGCFA. 2 cysteine pairs are disulfide-bonded: C31-C64 and C107-C328. The region spanning 36–235 is the Cupin type-1 1 domain; sequence LNALEPDNSV…AFSVDREIVR (200 aa). Disordered stretches follow at residues 111–131, 195–216, and 251–322; these read YEEP…RHQK, QQKE…NVLS, and VKEG…DRNG. The span at 195–207 shows a compositional bias: low complexity; sequence QQKEGGQGQQQEG. Residues 270–280 are compositionally biased toward acidic residues; that stretch reads EEEEEEEEEEE. Basic residues predominate over residues 306-315; sequence QVRRVRRPHH. The region spanning 334-483 is the Cupin type-1 2 domain; the sequence is HNIGQSTSPD…AFNLDRDQAR (150 aa). N-linked (GlcNAc...) asparagine glycans are attached at residues N397 and N439.

It belongs to the 11S seed storage protein (globulins) family. Hexamer; each subunit is composed of an acidic and a basic chain derived from a single precursor and linked by a disulfide bond. Component of globulins complexes which accumulate in seeds. As to expression, expressed in developing cotyledons and in the embryonic axis of germinating seeds.

Functionally, sulfur-rich seed storage protein. This protein found in the seeds of many leguminous and non-leguminous plants is the source of sulfur-containing amino acids in seed meals. The chain is Conglutin alpha 1 from Lupinus angustifolius (Narrow-leaved blue lupine).